We begin with the raw amino-acid sequence, 462 residues long: Glutamate--tRNA ligase 2 (462 aa).

Positions P8–G18 match the 'HIGH' region motif. Positions P227–R231 match the 'KMSKS' region motif. K230 contacts ATP.

This sequence belongs to the class-I aminoacyl-tRNA synthetase family. Glutamate--tRNA ligase type 1 subfamily. As to quaternary structure, monomer.

Its subcellular location is the cytoplasm. The catalysed reaction is tRNA(Glu) + L-glutamate + ATP = L-glutamyl-tRNA(Glu) + AMP + diphosphate. Its function is as follows. Catalyzes the attachment of glutamate to tRNA(Glu) in a two-step reaction: glutamate is first activated by ATP to form Glu-AMP and then transferred to the acceptor end of tRNA(Glu). The chain is Glutamate--tRNA ligase 2 from Thermosipho melanesiensis (strain DSM 12029 / CIP 104789 / BI429).